A 193-amino-acid chain; its full sequence is LOB domain-containing protein 12 (193 aa).

One can recognise an LOB domain in the interval 7-108; it reads SPCASCKLLR…MQLAVAQAEI (102 aa).

This sequence belongs to the LOB domain-containing protein family. In terms of tissue distribution, expressed predominantly in roots, and at low levels in shoots, floral stems and open flowers.

In Arabidopsis thaliana (Mouse-ear cress), this protein is LOB domain-containing protein 12 (LBD12).